Reading from the N-terminus, the 229-residue chain is Ribonuclease HII (229 aa).

In terms of domain architecture, RNase H type-2 spans 34-225 (GPVAGVDEAG…VKAAHDQWLQ (192 aa)). A divalent metal cation is bound by residues Asp40, Glu41, and Asp134.

It belongs to the RNase HII family. Requires Mn(2+) as cofactor. Mg(2+) serves as cofactor.

The protein localises to the cytoplasm. The catalysed reaction is Endonucleolytic cleavage to 5'-phosphomonoester.. Its function is as follows. Endonuclease that specifically degrades the RNA of RNA-DNA hybrids. In Corynebacterium diphtheriae (strain ATCC 700971 / NCTC 13129 / Biotype gravis), this protein is Ribonuclease HII.